The chain runs to 294 residues: MASLKEMRNRIASVKATQKITKAMQMVAAAKLRRSQDAAEAARPYARRLAAVIANLAAGVTGDGAPPMLAGTGRDDRHLIIVAAADRGLAGGFTSSIVRAARERIETLIAQGKDVKIVCIGKKSTAQLRRLYSDRIVEDFDLSAYRQFTLTVAQPIADVVTRLYEAGDVDVVTLFYSRFKSVVIQTPTALQLIPATVDGANAPAAAQGAQAVYEYEPSEEEILETLLPRNLTVQILSALLDNMAGFYASQMTAMDNATRNAGDMIKRYTLEYNRSRQAQITKELIEIISGAEAV.

This sequence belongs to the ATPase gamma chain family. F-type ATPases have 2 components, CF(1) - the catalytic core - and CF(0) - the membrane proton channel. CF(1) has five subunits: alpha(3), beta(3), gamma(1), delta(1), epsilon(1). CF(0) has three main subunits: a, b and c.

The protein localises to the cell inner membrane. Produces ATP from ADP in the presence of a proton gradient across the membrane. The gamma chain is believed to be important in regulating ATPase activity and the flow of protons through the CF(0) complex. This Caulobacter sp. (strain K31) protein is ATP synthase gamma chain.